Here is a 236-residue protein sequence, read N- to C-terminus: Purine nucleoside phosphorylase DeoD-type (236 aa).

Histidine 4 is a binding site for a purine D-ribonucleoside. Phosphate is bound by residues glycine 20, arginine 24, arginine 43, and 87-90 (RVGS). A purine D-ribonucleoside contacts are provided by residues 179 to 181 (EME) and 203 to 204 (SD). The Proton donor role is filled by aspartate 204.

The protein belongs to the PNP/UDP phosphorylase family. In terms of assembly, homohexamer; trimer of homodimers.

It carries out the reaction a purine D-ribonucleoside + phosphate = a purine nucleobase + alpha-D-ribose 1-phosphate. The catalysed reaction is a purine 2'-deoxy-D-ribonucleoside + phosphate = a purine nucleobase + 2-deoxy-alpha-D-ribose 1-phosphate. Catalyzes the reversible phosphorolytic breakdown of the N-glycosidic bond in the beta-(deoxy)ribonucleoside molecules, with the formation of the corresponding free purine bases and pentose-1-phosphate. This Limosilactobacillus reuteri (strain DSM 20016) (Lactobacillus reuteri) protein is Purine nucleoside phosphorylase DeoD-type.